The sequence spans 221 residues: Queuosine precursor transporter (221 aa).

Residues 1–12 are Cytoplasmic-facing; that stretch reads MNVFSQTQRYKA. A helical transmembrane segment spans residues 13 to 33; the sequence is LFWLSLFHLLVITSSNYLVQL. Pro34 is a topological domain (periplasmic). A helical membrane pass occupies residues 35-55; it reads VSILGFHTTWGAFSFPFIFLA. Over 56-70 the chain is Cytoplasmic; sequence TDLTVRIFGAPLARR. A helical transmembrane segment spans residues 71 to 91; sequence IIFAVMIPALLISYVISSLFY. The Periplasmic segment spans residues 92-97; that stretch reads MGSWQG. A helical membrane pass occupies residues 98–118; it reads FGALAHFNLFVARIATASFMA. The Cytoplasmic segment spans residues 119-143; the sequence is YALGQILDVHVFNRLRQSRRWWLAP. The helical transmembrane segment at 144–164 threads the bilayer; it reads TASTLFGNVSDTLAFFFIAFW. Residues 165–184 are Periplasmic-facing; sequence RSPDAFMAEHWMEIALVDYC. A helical transmembrane segment spans residues 185 to 205; that stretch reads FKVLISIVFFLPMYGVLLNML. The Cytoplasmic segment spans residues 206–221; sequence LKRLADKSEINALQAS.

This sequence belongs to the vitamin uptake transporter (VUT/ECF) (TC 2.A.88) family. Q precursor transporter subfamily.

Its subcellular location is the cell inner membrane. Its function is as follows. Involved in the import of queuosine (Q) precursors, required for Q precursor salvage. Transports 7-cyano-7-deazaguanine (preQ(0)) and 7-aminomethyl-7-deazaguanine (preQ(1)), with a preference for preQ(0). The protein is Queuosine precursor transporter (yhhQ) of Escherichia coli (strain K12).